A 424-amino-acid chain; its full sequence is ATP-sensitive inward rectifier potassium channel 8 (424 aa).

At 1-69 the chain is on the cytoplasmic side; it reads MLARKSIIPE…IFTTLVDLKW (69 aa). Ser-6 bears the Phosphoserine mark. Residues 70 to 94 form a helical membrane-spanning segment; it reads RHTLVIFTMSFLCSWLLFAIMWWLV. Over 95–126 the chain is Extracellular; sequence AFAHGDIYAYMEKGITEKSGLESAVCVTNVRS. An intramembrane region (helical; Pore-forming) is located at residues 127 to 138; it reads FTSAFLFSIEVQ. Residues 139-145 constitute an intramembrane region (pore-forming); sequence VTIGFGG. Residues 140 to 145 carry the Selectivity filter motif; sequence TIGFGG. The Extracellular portion of the chain corresponds to 146-154; sequence RMMTEECPL. The chain crosses the membrane as a helical span at residues 155–176; it reads AITVLILQNIVGLIINAVMLGC. At 177–424 the chain is on the cytoplasmic side; that stretch reads IFMKTAQAHR…PEGNQCPSES (248 aa). Residues 374–424 form a disordered region; it reads LSHQNSLRKRNSMRRNNSMRRSNSIRRNNSSLMVPKVQFMTPEGNQCPSES. Over residues 387-404 the composition is skewed to low complexity; sequence RRNNSMRRSNSIRRNNSS.

It belongs to the inward rectifier-type potassium channel (TC 1.A.2.1) family. KCNJ8 subfamily. Interacts with ABCC9. As to expression, widely expressed, including in pancreatic islets, pituitary, skeletal muscle and heart.

It is found in the membrane. It catalyses the reaction K(+)(in) = K(+)(out). Functionally, inward rectifier potassium channels are characterized by a greater tendency to allow potassium to flow into the cell rather than out of it. Their voltage dependence is regulated by the concentration of extracellular potassium; as external potassium is raised, the voltage range of the channel opening shifts to more positive voltages. The inward rectification is mainly due to the blockage of outward current by internal magnesium. This channel is activated by internal ATP and can be blocked by external barium. Can form a sulfonyllurea-sensitive but ATP-insensitive potassium channel with ABCC9. This Rattus norvegicus (Rat) protein is ATP-sensitive inward rectifier potassium channel 8 (Kcnj8).